The primary structure comprises 103 residues: Large ribosomal subunit protein uL24 (103 aa).

It belongs to the universal ribosomal protein uL24 family. Part of the 50S ribosomal subunit.

Functionally, one of two assembly initiator proteins, it binds directly to the 5'-end of the 23S rRNA, where it nucleates assembly of the 50S subunit. Its function is as follows. One of the proteins that surrounds the polypeptide exit tunnel on the outside of the subunit. This chain is Large ribosomal subunit protein uL24, found in Glaesserella parasuis serovar 5 (strain SH0165) (Haemophilus parasuis).